The primary structure comprises 222 residues: Ribonuclease S-3 (222 aa).

The signal sequence occupies residues methionine 1–alanine 22. A disulfide bond links cysteine 38 and cysteine 44. N-linked (GlcNAc...) asparagine glycosylation is present at asparagine 50. Histidine 54 serves as the catalytic Proton donor. Residues histidine 54, glutamine 92 to methionine 93, histidine 109 to glutamate 110, and arginine 113 to histidine 114 contribute to the RNA site. Cystine bridges form between cysteine 68-cysteine 117, cysteine 177-cysteine 210, and cysteine 193-cysteine 204. Glutamate 110 is a catalytic residue. Histidine 114 (proton acceptor) is an active-site residue.

The protein belongs to the RNase T2 family.

It localises to the secreted. It is found in the extracellular space. It carries out the reaction a ribonucleotidyl-ribonucleotide-RNA + H2O = a 3'-end 3'-phospho-ribonucleotide-RNA + a 5'-end dephospho-ribonucleoside-RNA + H(+). Its function is as follows. Self-incompatibility (SI) is the inherited ability of a flowering plant to prevent self-fertilization by discriminating between self and non-self pollen during pollination. In many species, self-incompatibility is controlled by the single, multiallelic locus S. The sequence is that of Ribonuclease S-3 (S3) from Petunia hybrida (Petunia).